Here is a 378-residue protein sequence, read N- to C-terminus: MKILVDENMPYARDLFSRLGEVTAVPGRPIPVAQLADADALMVRSVTKVNESLLAGKPIKFVGTATAGTDHVDEAWLKQAGIGFSAAPGCNAIAVVEYVFSSLLMLAERDGFSLHERTVGIVGVGNVGRRLQARLEALGIKTLLCDPPRADRGDEGDFRSLDELVQRADILTFHTPLFKDGPYKTLHLADEKLIRSLKPGAILINACRGAVVDNTALLTCLNEGQKLSVVLDVWEGEPELNVELLTKVDIGTPHIAGYTLEGKARGTTQVFEAYSKFIGHKQHVALDTLLPAPEFGRITLHGPLDQPTLKRLVHLVYDVRRDDAPLRKVAGIPGEFDKLRKNYLERREWSSLYVICDDASAASLLCKLGFNAVHHPAR.

Ser-45 and Thr-66 together coordinate substrate. Asp-146 and Thr-175 together coordinate NAD(+). Arg-208 is an active-site residue. Asp-232 contacts NAD(+). The active site involves Glu-237. Residue His-254 is the Proton donor of the active site. Gly-257 is a binding site for NAD(+). Tyr-258 lines the substrate pocket.

It belongs to the D-isomer specific 2-hydroxyacid dehydrogenase family. PdxB subfamily. Homodimer.

It localises to the cytoplasm. The catalysed reaction is 4-phospho-D-erythronate + NAD(+) = (R)-3-hydroxy-2-oxo-4-phosphooxybutanoate + NADH + H(+). It functions in the pathway cofactor biosynthesis; pyridoxine 5'-phosphate biosynthesis; pyridoxine 5'-phosphate from D-erythrose 4-phosphate: step 2/5. Functionally, catalyzes the oxidation of erythronate-4-phosphate to 3-hydroxy-2-oxo-4-phosphonooxybutanoate. In Shigella dysenteriae serotype 1 (strain Sd197), this protein is Erythronate-4-phosphate dehydrogenase.